Reading from the N-terminus, the 131-residue chain is Global transcriptional regulator Spx 1 (131 aa).

An intrachain disulfide couples cysteine 10 to cysteine 13.

This sequence belongs to the ArsC family. Spx subfamily. Interacts with the C-terminal domain of the alpha subunit of the RNAP.

It localises to the cytoplasm. Global transcriptional regulator that plays a key role in stress response and exerts either positive or negative regulation of genes. Acts by interacting with the C-terminal domain of the alpha subunit of the RNA polymerase (RNAP). This interaction can enhance binding of RNAP to the promoter region of target genes and stimulate their transcription, or block interaction of RNAP with activator. The protein is Global transcriptional regulator Spx 1 of Oceanobacillus iheyensis (strain DSM 14371 / CIP 107618 / JCM 11309 / KCTC 3954 / HTE831).